The chain runs to 706 residues: Catalase HPII (706 aa).

Residues H77 and N151 contribute to the active site. A heme-binding site is contributed by Y365. Positions 512-532 (EPPEEQVDESAPVSPALSQVT) are disordered.

Belongs to the catalase family. HPII subfamily. Requires heme as cofactor.

The protein localises to the cytoplasm. It carries out the reaction 2 H2O2 = O2 + 2 H2O. Its function is as follows. Decomposes hydrogen peroxide into water and oxygen; serves to protect cells from the toxic effects of hydrogen peroxide. The sequence is that of Catalase HPII (katE) from Mycobacterium avium.